Here is a 757-residue protein sequence, read N- to C-terminus: Inhibitor of nuclear factor kappa-B kinase subunit beta (757 aa).

The region spanning 15–300 (WEMKERLGTG…DPQYGPNGCF (286 aa)) is the Protein kinase domain. Residues 21 to 29 (LGTGGFGNV) and K44 contribute to the ATP site. Residue D145 is the Proton acceptor of the active site. A Glycyl lysine isopeptide (Lys-Gly) (interchain with G-Cter in ubiquitin) cross-link involves residue K163. At S177 the chain carries Phosphoserine; by TBK1 and PKC/PRKCZ. Residue C179 is modified to S-nitrosocysteine. S181 carries the phosphoserine; by TBK1, PKC/PRKCZ and PDPK1 modification. Hydroxyproline is present on P191. Residues 458 to 479 (LLRNNSCLSKMKNAMASTAQQL) form a leucine-zipper region. S670 carries the post-translational modification Phosphoserine; by autocatalysis. Phosphoserine is present on S672. 8 positions are modified to phosphoserine; by autocatalysis: S675, S682, S689, S692, S697, S705, S733, and S740. Positions 682 to 703 (SHPGHLMSQPSSACDSLPDSDK) are disordered. Residues 737 to 742 (LDWSWL) are NEMO-binding.

Belongs to the protein kinase superfamily. Ser/Thr protein kinase family. I-kappa-B kinase subfamily. As to quaternary structure, component of the I-kappa-B-kinase (IKK) core complex consisting of CHUK, IKBKB and IKBKG; probably four alpha/CHUK-beta/IKBKB dimers are associated with four gamma/IKBKG subunits. The IKK core complex seems to associate with regulatory or adapter proteins to form a IKK-signalosome holo-complex. The IKK complex associates with TERF2IP/RAP1, leading to promote IKK-mediated phosphorylation of RELA/p65. Part of a complex composed of NCOA2, NCOA3, CHUK/IKKA, IKBKB, IKBKG and CREBBP. Part of a 70-90 kDa complex at least consisting of CHUK/IKKA, IKBKB, NFKBIA, RELA, ELP1 and MAP3K14. Found in a membrane raft complex, at least composed of BCL10, CARD11, DPP4 and IKBKB. Interacts with SQSTM1 through PRKCZ or PRKCI. Forms an NGF-induced complex with IKBKB, PRKCI and TRAF6. May interact with MAVS/IPS1. Interacts with NALP2. Interacts with TICAM1. Interacts with FAF1; the interaction disrupts the IKK complex formation. Interacts with ATM. Part of a ternary complex consisting of TANK, IKBKB and IKBKG. Interacts with NIBP; the interaction is direct. Interacts with ARRB1 and ARRB2. Interacts with TRIM21. Interacts with NLRC5; prevents IKBKB phosphorylation and kinase activity. Interacts with PDPK1. Interacts with EIF2AK2/PKR. The phosphorylated form interacts with PPM1A and PPM1B. Interacts with ZNF268 isoform 2; the interaction is further increased in a TNF-alpha-dependent manner. Interacts with IKBKE. Interacts with ZC3H12A. Interacts with AKAP13. Interacts with LRRC14; disrupts IKBKB-IKBKG interaction preventing I-kappa-B-kinase (IKK) core complex formation and leading to a decrease of IKBKB phosphorylation and NF-kappaB activation. Interacts with SASH1. Interacts with ARFIP2. Interacts with FKBP5. In terms of processing, upon cytokine stimulation, phosphorylated on Ser-177 and Ser-181 by MEKK1 and/or MAP3K14/NIK as well as TBK1 and PRKCZ; which enhances activity. Phosphorylated by MAP3K7/TAK1 in response to NOD1 and NOD2 signaling, promoting activation and phosphorylation of NF-kappa-B inhibitors, leading to NF-kappa-B activation. Once activated, autophosphorylates on the C-terminal serine cluster; which decreases activity and prevents prolonged activation of the inflammatory response. Phosphorylated by the IKK-related kinases TBK1 and IKBKE, which is associated with reduced CHUK/IKKA and IKBKB activity and NF-kappa-B-dependent gene transcription. Dephosphorylated at Ser-177 and Ser-181 by PPM1A and PPM1B. Ubiquitinated. Monoubiquitination involves TRIM21 that leads to inhibition of Tax-induced NF-kappa-B signaling. 'Ser-163' may not serve as a monoubiquitination site. Ubiquitination on 'Ser-163' may modulate phosphorylation on C-terminal serine residues. Post-translationally, hydroxylated by PHD1/EGLN2, loss of hydroxylation under hypoxic conditions results in activation of NF-kappa-B.

Its subcellular location is the cytoplasm. It localises to the nucleus. It is found in the membrane raft. The enzyme catalyses L-seryl-[I-kappa-B protein] + ATP = O-phospho-L-seryl-[I-kappa-B protein] + ADP + H(+). The catalysed reaction is L-seryl-[protein] + ATP = O-phospho-L-seryl-[protein] + ADP + H(+). It catalyses the reaction L-threonyl-[protein] + ATP = O-phospho-L-threonyl-[protein] + ADP + H(+). Its function is as follows. Serine kinase that plays an essential role in the NF-kappa-B signaling pathway which is activated by multiple stimuli such as inflammatory cytokines, bacterial or viral products, DNA damages or other cellular stresses. Acts as a part of the canonical IKK complex in the conventional pathway of NF-kappa-B activation. Phosphorylates inhibitors of NF-kappa-B on 2 critical serine residues. These modifications allow polyubiquitination of the inhibitors and subsequent degradation by the proteasome. In turn, free NF-kappa-B is translocated into the nucleus and activates the transcription of hundreds of genes involved in immune response, growth control, or protection against apoptosis. In addition to the NF-kappa-B inhibitors, phosphorylates several other components of the signaling pathway including NEMO/IKBKG, NF-kappa-B subunits RELA and NFKB1, as well as IKK-related kinases TBK1 and IKBKE. IKK-related kinase phosphorylations may prevent the overproduction of inflammatory mediators since they exert a negative regulation on canonical IKKs. Phosphorylates FOXO3, mediating the TNF-dependent inactivation of this pro-apoptotic transcription factor. Also phosphorylates other substrates including NAA10, NCOA3, BCL10 and IRS1. Phosphorylates RIPK1 at 'Ser-25' which represses its kinase activity and consequently prevents TNF-mediated RIPK1-dependent cell death. Phosphorylates the C-terminus of IRF5, stimulating IRF5 homodimerization and translocation into the nucleus. The chain is Inhibitor of nuclear factor kappa-B kinase subunit beta (Ikbkb) from Rattus norvegicus (Rat).